The chain runs to 137 residues: Venom allergen 4 (137 aa).

Residues 1-19 (MKTFVLVSCLLVFTQIIYA) form the signal peptide.

This sequence belongs to the ant venom allergen 2/4 family. Monomer. In terms of tissue distribution, expressed by the venom gland.

The protein localises to the secreted. The sequence is that of Venom allergen 4 from Solenopsis invicta (Red imported fire ant).